The following is an 872-amino-acid chain: Eukaryotic translation initiation factor 3 subunit C (872 aa).

A disordered region spans residues 1–100 (MSRFFRGGDD…KVKSAKDKRF (100 aa)). Composition is skewed to acidic residues over residues 16-59 (SSEE…DEEE) and 72-87 (SDDESEEEEEEQSDDE). The span at 88-100 (ATTKVKSAKDKRF) shows a compositional bias: basic and acidic residues. The PCI domain maps to 613 to 787 (FHMHINLELL…ETVIFRKGVE (175 aa)). The tract at residues 812–872 (TLEQKTQGSA…GGALGNAVRG (61 aa)) is disordered. The span at 831 to 848 (GGGQRGGGQRGGRGGART) shows a compositional bias: gly residues.

It belongs to the eIF-3 subunit C family. As to quaternary structure, component of the eukaryotic translation initiation factor 3 (eIF-3) complex.

The protein resides in the cytoplasm. Functionally, component of the eukaryotic translation initiation factor 3 (eIF-3) complex, which is involved in protein synthesis of a specialized repertoire of mRNAs and, together with other initiation factors, stimulates binding of mRNA and methionyl-tRNAi to the 40S ribosome. The eIF-3 complex specifically targets and initiates translation of a subset of mRNAs involved in cell proliferation. This is Eukaryotic translation initiation factor 3 subunit C (nip-1) from Neurospora crassa (strain ATCC 24698 / 74-OR23-1A / CBS 708.71 / DSM 1257 / FGSC 987).